The chain runs to 306 residues: Palmitoyl-protein thioesterase ABHD10, mitochondrial (306 aa).

Residues 1 to 52 (MAVARLAAVAAWVPCRSWGCAAVPFGPHRGLSALLARIPQRAPRWLPACRQK) constitute a mitochondrion transit peptide. The AB hydrolase-1 domain maps to 78–177 (IIFIPGYLSY…KVVALLGVAT (100 aa)). Active-site charge relay system residues include Ser152, Asp249, and His279.

Belongs to the AB hydrolase superfamily.

The protein localises to the mitochondrion. The enzyme catalyses S-hexadecanoyl-L-cysteinyl-[protein] + H2O = L-cysteinyl-[protein] + hexadecanoate + H(+). It carries out the reaction mycophenolic acid O-acyl-beta-D-glucuronide + H2O = mycophenolate + D-glucuronate + H(+). Its activity is regulated as follows. Inhibited by palmostatin-B. Its function is as follows. Acts as an acyl-protein thioesterase that hydrolyzes fatty acids from acylated residues in proteins. Regulates the mitochondrial S-depalmitoylation of the nucleophilic active site residue of peroxiredoxin-5/PRDX5, a key antioxidant protein, therefore modulating mitochondrial antioxidant ability. Also catalyzes the deglucuronidation of mycophenolic acid acyl-glucuronide, an active metabolite of the immunosuppressant drug mycophenolate. The polypeptide is Palmitoyl-protein thioesterase ABHD10, mitochondrial (ABHD10) (Pongo abelii (Sumatran orangutan)).